Consider the following 1286-residue polypeptide: ABC transporter B family member 1 (1286 aa).

2 helical membrane passes run 42–62 and 93–113; these read VLMG…PLFL and FLVV…CWMW. In terms of domain architecture, ABC transmembrane type-1 1 spans 44 to 333; it reads MGIGSVGAFV…SAPSMAAFAK (290 aa). ATP is bound at residue D139. A run of 2 helical transmembrane segments spans residues 166-186 and 187-207; these read LGNF…GFTA and VWQL…IGGI. N217 is a glycosylation site (N-linked (GlcNAc...) asparagine). Transmembrane regions (helical) follow at residues 277 to 297 and 301 to 321; these read ATYF…GYLV and LTNG…GLAL. A brassinolide-binding site is contributed by Y286. Positions 368 to 604 constitute an ABC transporter 1 domain; sequence VELKNVDFSY…GENGVYAKLI (237 aa). Y377, S379, R380, G408, K409, S410, and T411 together coordinate ATP. Residues 614 to 647 are disordered; the sequence is AMSNARKSSARPSSARNSVSSPIMTRNSSYGRSP. Low complexity predominate over residues 616 to 635; it reads SNARKSSARPSSARNSVSSP. N-linked (GlcNAc...) asparagine glycosylation is present at N640. In terms of domain architecture, ABC transmembrane type-1 2 spans 700-988; it reads ALLGSVGSVI…TLTLAPDFIK (289 aa). The next 2 helical transmembrane spans lie at 705 to 725 and 745 to 765; these read VGSV…SAVL and YLLI…HSFW. N-linked (GlcNAc...) asparagine glycosylation is present at N771. Residue D793 coordinates ATP. N-linked (GlcNAc...) asparagine glycosylation is present at N797. The next 4 helical transmembrane spans lie at 821–843, 845–867, 932–952, and 967–987; these read ISVI…VLQW, LALV…KMFM, VAQF…SWLV, and MVLM…PDFI. Brassinolide contacts are provided by Y941 and E978. The region spanning 1024-1260 is the ABC transporter 2 domain; sequence VELKHIDFSY…HPDGIYARMI (237 aa). Y1033, R1036, G1064, K1065, and S1066 together coordinate ATP. An interaction with FKBP42/TWD1 region spans residues 1049–1286; the sequence is ARAGKTLALV…SSSRVKEDDA (238 aa).

Belongs to the ABC transporter superfamily. ABCB family. Multidrug resistance exporter (TC 3.A.1.201) subfamily. In terms of assembly, interacts with 1-naphthylphthalamic acid (NPA) and FKBP42/TWD1. Ubiquitous, with high levels in peduncles. Mostly localized in young developing tissues, including meristems, as well as root and shoot apices.

The protein localises to the cell membrane. The catalysed reaction is (indol-3-yl)acetate(in) + ATP + H2O = (indol-3-yl)acetate(out) + ADP + phosphate + H(+). It carries out the reaction brassinolide(in) + ATP + H2O = brassinolide(out) + ADP + phosphate + H(+). The enzyme catalyses 24-epi-brassinolide(in) + ATP + H2O = 24-epi-brassinolide(out) + ADP + phosphate + H(+). It catalyses the reaction 24-epi-castasterone(in) + ATP + H2O = 24-epi-castasterone(out) + ADP + phosphate + H(+). The catalysed reaction is castasterone(in) + ATP + H2O = castasterone(out) + ADP + phosphate + H(+). Its activity is regulated as follows. Transport capacity is stimulated by the chaperone protein FKBP42/TWD1. Transport activity inhibited by 1-N-naphthylphthalamic acid (NPA), cyclopropyl propane dione (CPD), cyclosporin A, verapamil and quercetin. ATPase activity is specifically activated by bioactive brassinosteroids in a dose-dependent manner, including brassinolide (BL), 24-epiBL, 24-epicastasterone (24-epiCS) and castasterone-alkyne; BL binding leads to structural changes. Inhibited by vanadate. Its function is as follows. Brassinosteroid exporter that, in conjunction with ABCB19, supports the accumulation of exogenous brassinosteroids (BR) in the apoplast, thus promoting BR signaling initiation involving the specific receptor BRI1 and required for plant growth and stress responses. Auxin efflux transporter that acts as a negative regulator of light signaling to promote hypocotyl elongation. May contribute to the regulation of leaf position and morphology during PHOT1-mediated blue light responses involving auxin distribution, especially in low light fluence. Together with ABCB19 and in a FKBP42/TWD1-dependent manner, supports seed development by promoting stamen elongation and, to a lesser extent, anther dehiscence and pollen maturation, probably as auxin transporters. Mediates the accumulation of chlorophyll and anthocyanin, as well as the expression of genes in response to light. Participates directly in auxin efflux and thus regulates the polar (presumably basipetal) auxin transport (from root tips to root elongating zone). Also transports some auxin metabolites such as oxindoleacetic acid and indoleacetaldehyde. Involved in diverse auxin-mediated responses including gravitropism, phototropism and lateral root formation. Confers resistance to herbicides such as dicamba, pendimethalin, oryzalin, and monosodium acid methanearsonate (MSMA), but not to herbicides such as glyphosate, atrazine, bentazon and fluazifop-p-butyl. Also mediates resistance to xenobiotics such as cycloheximide and the cytokinin N6-(2-isopentenyl)adenine (2IP). The sequence is that of ABC transporter B family member 1 from Arabidopsis thaliana (Mouse-ear cress).